Here is a 197-residue protein sequence, read N- to C-terminus: Protein GrpE (197 aa).

The span at 1–27 (MTKQEKAENQEKPTEETVEETPKKETP) shows a compositional bias: basic and acidic residues. The tract at residues 1–50 (MTKQEKAENQEKPTEETVEETPKKETPFEPVMEADEVEETTEAQAPVEEA) is disordered. Residues 32 to 41 (MEADEVEETT) are compositionally biased toward acidic residues.

It belongs to the GrpE family. As to quaternary structure, homodimer.

It is found in the cytoplasm. Functionally, participates actively in the response to hyperosmotic and heat shock by preventing the aggregation of stress-denatured proteins, in association with DnaK and GrpE. It is the nucleotide exchange factor for DnaK and may function as a thermosensor. Unfolded proteins bind initially to DnaJ; upon interaction with the DnaJ-bound protein, DnaK hydrolyzes its bound ATP, resulting in the formation of a stable complex. GrpE releases ADP from DnaK; ATP binding to DnaK triggers the release of the substrate protein, thus completing the reaction cycle. Several rounds of ATP-dependent interactions between DnaJ, DnaK and GrpE are required for fully efficient folding. This is Protein GrpE from Latilactobacillus sakei (Lactobacillus sakei).